Here is a 131-residue protein sequence, read N- to C-terminus: Small ribosomal subunit protein uS8 (131 aa).

Belongs to the universal ribosomal protein uS8 family. In terms of assembly, part of the 30S ribosomal subunit. Contacts proteins S5 and S12.

Its function is as follows. One of the primary rRNA binding proteins, it binds directly to 16S rRNA central domain where it helps coordinate assembly of the platform of the 30S subunit. The sequence is that of Small ribosomal subunit protein uS8 from Cupriavidus metallidurans (strain ATCC 43123 / DSM 2839 / NBRC 102507 / CH34) (Ralstonia metallidurans).